Reading from the N-terminus, the 193-residue chain is Potassium-transporting ATPase KdpC subunit (193 aa).

A helical membrane pass occupies residues 14–34 (ITFTFLVLCGLVYPLIVTGIA).

It belongs to the KdpC family. The system is composed of three essential subunits: KdpA, KdpB and KdpC.

The protein resides in the cell membrane. In terms of biological role, part of the high-affinity ATP-driven potassium transport (or Kdp) system, which catalyzes the hydrolysis of ATP coupled with the electrogenic transport of potassium into the cytoplasm. This subunit acts as a catalytic chaperone that increases the ATP-binding affinity of the ATP-hydrolyzing subunit KdpB by the formation of a transient KdpB/KdpC/ATP ternary complex. In Bacillus cereus (strain ATCC 14579 / DSM 31 / CCUG 7414 / JCM 2152 / NBRC 15305 / NCIMB 9373 / NCTC 2599 / NRRL B-3711), this protein is Potassium-transporting ATPase KdpC subunit.